Consider the following 435-residue polypeptide: Putative BTB/POZ domain-containing protein L275 (435 aa).

The region spanning 80-149 (YDGYVYINVG…IKGKQNDNHN (70 aa)) is the BTB domain.

It belongs to the mimivirus BTB/WD family.

The protein is Putative BTB/POZ domain-containing protein L275 of Acanthamoeba polyphaga mimivirus (APMV).